Consider the following 159-residue polypeptide: Transcriptional repressor NrdR (159 aa).

The tract at residues 1–21 (MRCPKCQHNKSNVIDSRQAED) is disordered. Residues 3–34 (CPKCQHNKSNVIDSRQAEDGNTIRRRRECDAC) fold into a zinc finger. The 91-residue stretch at 49-139 (LLVVKKDGTR…VYRSFKDVDE (91 aa)) folds into the ATP-cone domain.

This sequence belongs to the NrdR family. The cofactor is Zn(2+).

Functionally, negatively regulates transcription of bacterial ribonucleotide reductase nrd genes and operons by binding to NrdR-boxes. The chain is Transcriptional repressor NrdR from Streptococcus thermophilus (strain ATCC BAA-491 / LMD-9).